The chain runs to 228 residues: Eukaryotic translation initiation factor 4E-1 (228 aa).

EIF4G-binding regions lie at residues 53-56 (HLLE) and 63-99 (FDTP…NNIH). Residues 71–76 (KQDDWG), Lys103, and 121–122 (WE) contribute to the mRNA site. A disulfide bond links Cys126 and Cys164. Positions 147 to 156 (YTLLAMIGEQ) are EIF4G-binding. MRNA-binding positions include 171–176 (RGRAEK) and 216–220 (RKLDR).

It belongs to the eukaryotic initiation factor 4E family. EIF4F is a multi-subunit complex, the composition of which varies with external and internal environmental conditions. It is composed of at least EIF4A, EIF4E and EIF4G. EIF4E is also known to interact with other partners. In higher plants two isoforms of EIF4F have been identified, named isoform EIF4F and isoform EIF(iso)4F. Isoform EIF4F has subunits p220 and p26, whereas isoform EIF(iso)4F has subunits p82 and p28. As to quaternary structure, (Microbial infection) Interacts with potyvirus viral genome-linked protein (VPg); this interaction is possible in susceptible hosts but impaired in resistant plants. In terms of processing, according to the redox status, the Cys-126-Cys-164 disulfide bridge may have a role in regulating protein function by affecting its ability to bind capped mRNA.

Its subcellular location is the nucleus. It is found in the cytoplasm. Component of the protein complex eIF4F, which is involved in the recognition of the mRNA cap, ATP-dependent unwinding of 5'-terminal secondary structure and recruitment of mRNA to the ribosome. Recognizes and binds the 7-methylguanosine-containing mRNA cap during an early step in the initiation of protein synthesis and facilitates ribosome binding by inducing the unwinding of the mRNAs secondary structures. Key component of recessive resistance to potyviruses. Functionally, (Microbial infection) Susceptibility host factor required for viral infection by recruiting viral RNAs to the host ribosomal complex via an interaction with viral genome-linked protein (VPg). Also seems to be involved in virus movement from cell-to-cell. This Pisum sativum (Garden pea) protein is Eukaryotic translation initiation factor 4E-1.